Consider the following 372-residue polypeptide: DNA damage-repair/toleration protein DRT100 (372 aa).

An N-terminal signal peptide occupies residues methionine 1–cysteine 26. LRR repeat units lie at residues serine 136–leucine 158, lysine 160–isoleucine 183, glutamate 184–serine 205, methionine 208–methionine 230, arginine 232–methionine 254, valine 256–serine 277, glycine 280–lysine 302, tyrosine 304–alanine 326, and phenylalanine 328–aspartate 350.

Its function is as follows. This protein is able to complement bacterial recA mutations, but its native function in the plant is not known. This is DNA damage-repair/toleration protein DRT100 (DRT100) from Arabidopsis thaliana (Mouse-ear cress).